Reading from the N-terminus, the 77-residue chain is uncharacterized protein (77 aa).

The span at 1–10 (MFNNKGRRNV) shows a compositional bias: basic residues. The interval 1 to 21 (MFNNKGRRNVRNNEVRRNVPV) is disordered. A compositionally biased stretch (basic and acidic residues) spans 11–21 (RNNEVRRNVPV). Residues 20 to 77 (PVKEGETYTVTIEDMGRGGDGIARVEGFVVFVPETQKGETVNVKITAVKSKFAFAEKI) enclose the TRAM domain.

This is an uncharacterized protein from Methanocaldococcus jannaschii (strain ATCC 43067 / DSM 2661 / JAL-1 / JCM 10045 / NBRC 100440) (Methanococcus jannaschii).